The chain runs to 467 residues: Adenosylhomocysteinase (467 aa).

Thr-68, Asp-144, and Glu-169 together coordinate substrate. Residue 170-172 (TTT) participates in NAD(+) binding. Positions 199 and 203 each coordinate substrate. Residues Asn-204, 233–238 (GYGDVG), Glu-256, Asn-305, 326–328 (IGH), and Asn-373 contribute to the NAD(+) site.

It belongs to the adenosylhomocysteinase family. NAD(+) serves as cofactor.

The protein localises to the cytoplasm. It carries out the reaction S-adenosyl-L-homocysteine + H2O = L-homocysteine + adenosine. It participates in amino-acid biosynthesis; L-homocysteine biosynthesis; L-homocysteine from S-adenosyl-L-homocysteine: step 1/1. Its function is as follows. May play a key role in the regulation of the intracellular concentration of adenosylhomocysteine. This Acinetobacter baylyi (strain ATCC 33305 / BD413 / ADP1) protein is Adenosylhomocysteinase.